The primary structure comprises 522 residues: Gypsy retrotransposon integrase-like protein 1 (522 aa).

The Integrase catalytic domain occupies 135-292 (KVENPWSLVT…TPYFQMFSRN (158 aa)).

The chain is Gypsy retrotransposon integrase-like protein 1 (GIN1) from Macaca fascicularis (Crab-eating macaque).